The chain runs to 1108 residues: DNA-directed RNA polymerase subunit beta (1108 aa).

Positions 1081 to 1108 (SPRRTPARPTIDYSALDDTDDKEGATTF) are disordered.

It belongs to the RNA polymerase beta chain family. In terms of assembly, in cyanobacteria the RNAP catalytic core is composed of 2 alpha, 1 beta, 1 beta', 1 gamma and 1 omega subunit. When a sigma factor is associated with the core the holoenzyme is formed, which can initiate transcription.

The enzyme catalyses RNA(n) + a ribonucleoside 5'-triphosphate = RNA(n+1) + diphosphate. Functionally, DNA-dependent RNA polymerase catalyzes the transcription of DNA into RNA using the four ribonucleoside triphosphates as substrates. The chain is DNA-directed RNA polymerase subunit beta from Thermosynechococcus vestitus (strain NIES-2133 / IAM M-273 / BP-1).